A 66-amino-acid polypeptide reads, in one-letter code: Protein translocase subunit SecE (66 aa).

A helical transmembrane segment spans residues 34–54 (LVVIVAVFVFSLICLVLDYGI).

Belongs to the SecE/SEC61-gamma family. As to quaternary structure, component of the Sec protein translocase complex. Heterotrimer consisting of SecY, SecE and SecG subunits. The heterotrimers can form oligomers, although 1 heterotrimer is thought to be able to translocate proteins. Interacts with the ribosome. Interacts with SecDF, and other proteins may be involved. Interacts with SecA.

The protein resides in the cell inner membrane. In terms of biological role, essential subunit of the Sec protein translocation channel SecYEG. Clamps together the 2 halves of SecY. May contact the channel plug during translocation. The polypeptide is Protein translocase subunit SecE (Rickettsia bellii (strain RML369-C)).